Reading from the N-terminus, the 326-residue chain is Tryptophan--tRNA ligase (326 aa).

ATP-binding positions include 11–13 and 19–20; these read QPT and GN. The 'HIGH' region signature appears at 12–20; that stretch reads PTGQIHLGN. Position 135 (aspartate 135) interacts with L-tryptophan. Residues 147-149, valine 186, and 195-199 contribute to the ATP site; these read GED and KMSKS. Positions 195 to 199 match the 'KMSKS' region motif; sequence KMSKS.

It belongs to the class-I aminoacyl-tRNA synthetase family. Homodimer.

Its subcellular location is the cytoplasm. It carries out the reaction tRNA(Trp) + L-tryptophan + ATP = L-tryptophyl-tRNA(Trp) + AMP + diphosphate + H(+). Functionally, catalyzes the attachment of tryptophan to tRNA(Trp). In Helicobacter pylori (strain J99 / ATCC 700824) (Campylobacter pylori J99), this protein is Tryptophan--tRNA ligase.